The primary structure comprises 134 residues: Profilin-1 (134 aa).

It belongs to the profilin family. As to quaternary structure, occurs in many kinds of cells as a complex with monomeric actin in a 1:1 ratio.

The protein resides in the cytoplasm. It is found in the cytoskeleton. Binds to actin and affects the structure of the cytoskeleton. At high concentrations, profilin prevents the polymerization of actin, whereas it enhances it at low concentrations. By binding to PIP2, it inhibits the formation of IP3 and DG. The protein is Profilin-1 (PRO1) of Nicotiana tabacum (Common tobacco).